We begin with the raw amino-acid sequence, 197 residues long: Glycerol-3-phosphate acyltransferase (197 aa).

The next 4 helical transmembrane spans lie at 1–21 (MTAL…GLLV), 69–89 (LPML…AVVG), 110–130 (VMLF…LVVL), and 152–172 (VFFT…SFIF).

Belongs to the PlsY family. In terms of assembly, probably interacts with PlsX.

It localises to the cell membrane. The enzyme catalyses an acyl phosphate + sn-glycerol 3-phosphate = a 1-acyl-sn-glycero-3-phosphate + phosphate. It participates in lipid metabolism; phospholipid metabolism. In terms of biological role, catalyzes the transfer of an acyl group from acyl-phosphate (acyl-PO(4)) to glycerol-3-phosphate (G3P) to form lysophosphatidic acid (LPA). This enzyme utilizes acyl-phosphate as fatty acyl donor, but not acyl-CoA or acyl-ACP. This Geobacillus kaustophilus (strain HTA426) protein is Glycerol-3-phosphate acyltransferase.